We begin with the raw amino-acid sequence, 228 residues long: Probable septum site-determining protein MinC (228 aa).

The protein belongs to the MinC family. In terms of assembly, interacts with MinD and FtsZ.

In terms of biological role, cell division inhibitor that blocks the formation of polar Z ring septums. Rapidly oscillates between the poles of the cell to destabilize FtsZ filaments that have formed before they mature into polar Z rings. Prevents FtsZ polymerization. This Oceanobacillus iheyensis (strain DSM 14371 / CIP 107618 / JCM 11309 / KCTC 3954 / HTE831) protein is Probable septum site-determining protein MinC.